A 682-amino-acid chain; its full sequence is MNPQQQRMAAIGTDKELSDLLDFSAMFSPPVNSGKTRPTTLGSSQFSGSGIDERGGTTSWGTSGQPSPSYDSSRGFTDSPHYSDHLNDSRLGAHEGLSPTPFMNSNLMGKTSERGSFSLYSRDTGLPGCQSSLLRQDLGLGSPAQLSSSGKPGTAYYSFSATSSRRRPLHDSAALDPLQAKKVRKVPPGLPSSVYAPSPNSDDFNRESPSYPSPKPPTSMFASTFFMQDGTHNSSDLWSSSNGMSQPGFGGILGTSTSHMSQSSSYGNLHSHDRLSYPPHSVSPTDINTSLPPMSSFHRGSTSSSPYVAASHTPPINGSDSILGTRGNAAGSSQTGDALGKALASIYSPDHTSSSFPSNPSTPVGSPSPLTGTSQWPRPGGQAPSSPSYENSLHSLQSRMEDRLDRLDDAIHVLRNHAVGPSTSLPAGHSDIHSLLGPSHNAPIGSLNSNYGGSSLVASSRSASMVGTHREDSVSLNGNHSVLSSTVTTSSTDLNHKTQENYRGGLQSQSGTVVTTEIKTENKEKDENLHEPPSSDDMKSDDESSQKDIKVSSRGRTSSTNEDEDLNPEQKIEREKERRMANNARERLRVRDINEAFKELGRMCQLHLKSEKPQTKLLILHQAVAVILSLEQQVRERNLNPKAACLKRREEEKVSAVSAEPPTTLPGTHPGLSETTNPMGHM.

Residues 19–27 (DLLDFSAMF) carry the 9aaTAD motif. Disordered stretches follow at residues 25–122 (AMFS…LYSR), 140–219 (LGSP…PPTS), and 281–313 (SVSPTDINTSLPPMSSFHRGSTSSSPYVAASHT). Composition is skewed to polar residues over residues 30–48 (PVNSGKTRPTTLGSSQFSG) and 56–76 (GTTSWGTSGQPSPSYDSSRGF). Phosphoserine occurs at positions 47, 67, and 79. Positions 81-93 (HYSDHLNDSRLGA) are enriched in basic and acidic residues. A Phosphoserine modification is found at Ser98. 2 stretches are compositionally biased toward polar residues: residues 101 to 121 (PFMNSNLMGKTSERGSFSLYS) and 144 to 163 (AQLSSSGKPGTAYYSFSATS). Lys110 participates in a covalent cross-link: Glycyl lysine isopeptide (Lys-Gly) (interchain with G-Cter in SUMO2). Ser116 carries the post-translational modification Phosphoserine. Residues 119–140 (LYSRDTGLPGCQSSLLRQDLGL) are leucine-zipper. Lys181 is covalently cross-linked (Glycyl lysine isopeptide (Lys-Gly) (interchain with G-Cter in SUMO2)). Residues 182-196 (KVRKVPPGLPSSVYA) form an interaction with RUNX1T1 region. Over residues 282–306 (VSPTDINTSLPPMSSFHRGSTSSSP) the composition is skewed to polar residues. Position 313 is a phosphothreonine (Thr313). A Phosphoserine modification is found at Ser333. 2 disordered regions span residues 349-395 (PDHT…SLHS) and 462-580 (SASM…ERRM). A compositionally biased stretch (low complexity) spans 352-363 (TSSSFPSNPSTP). 2 stretches are compositionally biased toward polar residues: residues 364 to 376 (VGSPSPLTGTSQW) and 383 to 395 (APSSPSYENSLHS). A compositionally biased stretch (low complexity) spans 481–492 (SVLSSTVTTSST). The segment covering 506-517 (LQSQSGTVVTTE) has biased composition (polar residues). 2 stretches are compositionally biased toward basic and acidic residues: residues 518–530 (IKTENKEKDENLH) and 536–551 (DDMKSDDESSQKDIKV). Lys519 is covalently cross-linked (Glycyl lysine isopeptide (Lys-Gly) (interchain with G-Cter in SUMO2)). Ser540 carries the phosphoserine modification. Residue Lys550 forms a Glycyl lysine isopeptide (Lys-Gly) (interchain with G-Cter in SUMO2) linkage. Thr557 carries the post-translational modification Phosphothreonine. 2 positions are modified to phosphoserine: Ser558 and Ser559. The segment covering 568 to 580 (PEQKIEREKERRM) has biased composition (basic and acidic residues). The bHLH domain occupies 577–630 (ERRMANNARERLRVRDINEAFKELGRMCQLHLKSEKPQTKLLILHQAVAVILSL). Residues Lys609 and Lys653 each participate in a glycyl lysine isopeptide (Lys-Gly) (interchain with G-Cter in SUMO2) cross-link. The tract at residues 632–655 (QQVRERNLNPKAACLKRREEEKVS) is class A specific domain. The disordered stretch occupies residues 651 to 682 (EEKVSAVSAEPPTTLPGTHPGLSETTNPMGHM). The span at 661-672 (PPTTLPGTHPGL) shows a compositional bias: low complexity. Over residues 673 to 682 (SETTNPMGHM) the composition is skewed to polar residues.

As to quaternary structure, efficient DNA binding requires dimerization with another bHLH protein. Forms homo- or heterooligomers with myogenin, E12 and ITF2 proteins. Interacts with PTF1A. Interacts with NEUROD2. Interacts with RUNX1T1. Interacts with AML1-MTG8/ETO (via nervy homology region 2 in oligomerized form). Interacts with BHLHA9. Expressed in several tissues and cell types including skeletal muscle, thymus, and a B-cell line.

The protein localises to the nucleus. Its function is as follows. Transcriptional regulator. Involved in the initiation of neuronal differentiation. Activates transcription by binding to the E box (5'-CANNTG-3'). May be involved in the functional network that regulates the development of the GnRH axis. The polypeptide is Transcription factor 12 (TCF12) (Homo sapiens (Human)).